Consider the following 481-residue polypeptide: Ras-GEF domain-containing family member 1A (481 aa).

The 130-residue stretch at 41-170 (QDGHLISGSL…AIAQMTQSLL (130 aa)) folds into the N-terminal Ras-GEF domain. The 248-residue stretch at 214–461 (DPLVLAQQLT…FVASFESEGP (248 aa)) folds into the Ras-GEF domain.

In terms of tissue distribution, detected in brain and spinal cord. Highly expressed in a number of intrahepatic cholangiocarcinoma tissue biopsies.

Guanine nucleotide exchange factor (GEF) with specificity for RAP2A, KRAS, HRAS, and NRAS (in vitro). Plays a role in cell migration. The sequence is that of Ras-GEF domain-containing family member 1A (RASGEF1A) from Homo sapiens (Human).